We begin with the raw amino-acid sequence, 135 residues long: Small ribosomal subunit protein bS6 (135 aa).

Residues 104 to 135 (FSRLDRNGHIGHDEKHPRSPSRQREDVIEGVE) are disordered.

Belongs to the bacterial ribosomal protein bS6 family.

Functionally, binds together with bS18 to 16S ribosomal RNA. The chain is Small ribosomal subunit protein bS6 from Bartonella henselae (strain ATCC 49882 / DSM 28221 / CCUG 30454 / Houston 1) (Rochalimaea henselae).